The sequence spans 811 residues: Transmembrane protease serine 6 (811 aa).

The Cytoplasmic portion of the chain corresponds to 1–55; the sequence is MLLLFHSKRMPVAEAPQVAGGQGDGGDGEEAEPEGMFKACEDSKRKARGYLRLVP. Residues 56–76 traverse the membrane as a helical; Signal-anchor for type II membrane protein segment; the sequence is LFVLLALLVLASAGVLLWYFL. Residues 77–811 are Extracellular-facing; it reads GYKAEVMVSQ…VISWIQQVVT (735 aa). One can recognise an SEA domain in the interval 84-209; the sequence is VSQVYSGSLR…EGLVILEASV (126 aa). N-linked (GlcNAc...) asparagine glycosylation is found at Asn136, Asn184, Asn216, Asn338, Asn433, and Asn453. 2 CUB domains span residues 213–336 and 335–452; these read AALN…QACE and CEVN…YGLY. Cys335 and Cys366 are oxidised to a cystine. LDL-receptor class A domains are found at residues 457–489, 490–526, and 530–567; these read PCPGEFLCSVNGLCVPACDGVKDCPNGLDERNC, VCRATFQCKEDSTCISLPKVCDGQPDCLNGSDEEQCQ, and PCGTFTFQCEDRSCVKKPNPQCDGRPDCRDGSDEEHCD. Cystine bridges form between Cys458–Cys470, Cys464–Cys480, Cys474–Cys489, Cys491–Cys503, Cys497–Cys516, Cys510–Cys525, Cys531–Cys543, Cys538–Cys557, Cys551–Cys566, and Cys602–Cys618. Asn518 carries an N-linked (GlcNAc...) asparagine glycan. The region spanning 577-811 is the Peptidase S1 domain; that stretch reads IVGGAVSSEG…VISWIQQVVT (235 aa). Residues His617 and Asp668 each act as charge relay system in the active site. Disulfide bonds link Cys702–Cys768, Cys733–Cys747, and Cys758–Cys787. Ser762 acts as the Charge relay system in catalysis.

Belongs to the peptidase S1 family. Interacts with HJV. In terms of processing, the single-chain zymogen undergoes autoproteolytic processing. This results in TMPRSS6 shedding from the cell surface and conversion into an activated two-chains form which is released extracellularly. The process involves a trans-activation mechanism that requires TMPRSS6 oligomerization.

The protein resides in the cell membrane. Its function is as follows. Membrane-bound serine protease. Through the cleavage of cell surface hemojuvelin (HJV), a regulator of the expression of the iron absorption-regulating hormone hepicidin/HAMP, plays a role in iron homeostasis. This is Transmembrane protease serine 6 (TMPRSS6) from Homo sapiens (Human).